Here is a 156-residue protein sequence, read N- to C-terminus: Arginine repressor (156 aa).

This sequence belongs to the ArgR family.

Its subcellular location is the cytoplasm. The protein operates within amino-acid biosynthesis; L-arginine biosynthesis [regulation]. Regulates arginine biosynthesis genes. This Vibrio campbellii (strain ATCC BAA-1116) protein is Arginine repressor.